We begin with the raw amino-acid sequence, 160 residues long: Serine-protein kinase RsbW (160 aa).

It belongs to the anti-sigma-factor family.

The enzyme catalyses L-seryl-[protein] + ATP = O-phospho-L-seryl-[protein] + ADP + H(+). It carries out the reaction L-threonyl-[protein] + ATP = O-phospho-L-threonyl-[protein] + ADP + H(+). Its function is as follows. Negative regulator of sigma-B activity. Phosphorylates and inactivates its specific antagonist protein, RsbV. Upon phosphorylation of RsbV, RsbW is released and binds to sigma-B, thereby blocking its ability to form an RNA polymerase holoenzyme (E-sigma-B). The chain is Serine-protein kinase RsbW from Bacillus mycoides (strain KBAB4) (Bacillus weihenstephanensis).